A 223-amino-acid chain; its full sequence is GTP cyclohydrolase 1 (223 aa).

3 residues coordinate Zn(2+): cysteine 114, histidine 117, and cysteine 185.

The protein belongs to the GTP cyclohydrolase I family. Homomer.

It catalyses the reaction GTP + H2O = 7,8-dihydroneopterin 3'-triphosphate + formate + H(+). It functions in the pathway cofactor biosynthesis; 7,8-dihydroneopterin triphosphate biosynthesis; 7,8-dihydroneopterin triphosphate from GTP: step 1/1. This Chlorobium chlorochromatii (strain CaD3) protein is GTP cyclohydrolase 1.